Here is a 241-residue protein sequence, read N- to C-terminus: Octanoyltransferase (241 aa).

The BPL/LPL catalytic domain maps to 38-227; the sequence is AGGPDTLLLL…AVCNALDGAL (190 aa). Substrate is bound by residues 85–92, 157–159, and 170–172; these read RGGKITWH, AIG, and GFA. Cys-188 serves as the catalytic Acyl-thioester intermediate.

The protein belongs to the LipB family.

The protein resides in the cytoplasm. The catalysed reaction is octanoyl-[ACP] + L-lysyl-[protein] = N(6)-octanoyl-L-lysyl-[protein] + holo-[ACP] + H(+). The protein operates within protein modification; protein lipoylation via endogenous pathway; protein N(6)-(lipoyl)lysine from octanoyl-[acyl-carrier-protein]: step 1/2. In terms of biological role, catalyzes the transfer of endogenously produced octanoic acid from octanoyl-acyl-carrier-protein onto the lipoyl domains of lipoate-dependent enzymes. Lipoyl-ACP can also act as a substrate although octanoyl-ACP is likely to be the physiological substrate. This is Octanoyltransferase from Mycobacterium ulcerans (strain Agy99).